The following is a 379-amino-acid chain: Queuine tRNA-ribosyltransferase (379 aa).

The Proton acceptor role is filled by Asp94. Substrate-binding positions include 94-98, Asp148, Gln191, and Gly218; that span reads DSGGF. Residues 249 to 255 form an RNA binding region; sequence GVGSPDS. Asp268 (nucleophile) is an active-site residue. The segment at 273 to 277 is RNA binding; important for wobble base 34 recognition; sequence TRIAR. Positions 306, 308, 311, and 337 each coordinate Zn(2+).

The protein belongs to the queuine tRNA-ribosyltransferase family. In terms of assembly, homodimer. Within each dimer, one monomer is responsible for RNA recognition and catalysis, while the other monomer binds to the replacement base PreQ1. Zn(2+) is required as a cofactor.

It catalyses the reaction 7-aminomethyl-7-carbaguanine + guanosine(34) in tRNA = 7-aminomethyl-7-carbaguanosine(34) in tRNA + guanine. Its pathway is tRNA modification; tRNA-queuosine biosynthesis. Functionally, catalyzes the base-exchange of a guanine (G) residue with the queuine precursor 7-aminomethyl-7-deazaguanine (PreQ1) at position 34 (anticodon wobble position) in tRNAs with GU(N) anticodons (tRNA-Asp, -Asn, -His and -Tyr). Catalysis occurs through a double-displacement mechanism. The nucleophile active site attacks the C1' of nucleotide 34 to detach the guanine base from the RNA, forming a covalent enzyme-RNA intermediate. The proton acceptor active site deprotonates the incoming PreQ1, allowing a nucleophilic attack on the C1' of the ribose to form the product. After dissociation, two additional enzymatic reactions on the tRNA convert PreQ1 to queuine (Q), resulting in the hypermodified nucleoside queuosine (7-(((4,5-cis-dihydroxy-2-cyclopenten-1-yl)amino)methyl)-7-deazaguanosine). This chain is Queuine tRNA-ribosyltransferase, found in Listeria welshimeri serovar 6b (strain ATCC 35897 / DSM 20650 / CCUG 15529 / CIP 8149 / NCTC 11857 / SLCC 5334 / V8).